Reading from the N-terminus, the 469-residue chain is D-3-phosphoglycerate dehydrogenase 1 (469 aa).

Residues Ser22, Ser29, and Ser33 each carry the phosphoserine modification. NAD(+) is bound by residues 208-209, Asp228, 285-287, and Asp311; these read HI and ASR. The active site involves Arg287. The active site involves Glu316. The active-site Proton donor is His347. Position 347-350 (347-350) interacts with NAD(+); sequence HIGG. An ACT domain is found at 399–469; that stretch reads RVLYIHQNVP…SAKISIRLLY (71 aa).

Belongs to the D-isomer specific 2-hydroxyacid dehydrogenase family.

It catalyses the reaction (2R)-3-phosphoglycerate + NAD(+) = 3-phosphooxypyruvate + NADH + H(+). The enzyme catalyses (R)-2-hydroxyglutarate + NAD(+) = 2-oxoglutarate + NADH + H(+). Its pathway is amino-acid biosynthesis; L-serine biosynthesis; L-serine from 3-phospho-D-glycerate: step 1/3. Catalyzes the reversible oxidation of 3-phospho-D-glycerate to 3-phosphonooxypyruvate, the first step of the phosphorylated L-serine biosynthesis pathway. Also catalyzes the reversible oxidation of 2-hydroxyglutarate to 2-oxoglutarate. The sequence is that of D-3-phosphoglycerate dehydrogenase 1 (SER3) from Saccharomyces cerevisiae (strain ATCC 204508 / S288c) (Baker's yeast).